The sequence spans 947 residues: Translation initiation factor IF-2 (947 aa).

The tract at residues 61 to 284 (IQANQPAKNP…TAKNNKSHKI (224 aa)) is disordered. Basic and acidic residues predominate over residues 151–169 (QIEKAKQKLQEIQKSREAL). Residues 175 to 188 (SNANNANSTNNANN) show a composition bias toward low complexity. Basic and acidic residues predominate over residues 189–206 (AKKEISEVKKQEQEIKRH). A compositionally biased stretch (basic residues) spans 207 to 218 (ENIKRRTGFRVI). Residues 247-262 (EDIKKEWQEKDKQEAK) are compositionally biased toward basic and acidic residues. The region spanning 446–615 (ERPPVVTIMG…LIQADIMELK (170 aa)) is the tr-type G domain. Residues 455–462 (GHVDHGKT) are G1. 455 to 462 (GHVDHGKT) serves as a coordination point for GTP. Residues 480-484 (GITQH) are G2. The tract at residues 501-504 (DTPG) is G3. Residues 501–505 (DTPGH) and 555–558 (NKMD) contribute to the GTP site. A G4 region spans residues 555–558 (NKMD). The G5 stretch occupies residues 591–593 (SAK).

Belongs to the TRAFAC class translation factor GTPase superfamily. Classic translation factor GTPase family. IF-2 subfamily.

It is found in the cytoplasm. Functionally, one of the essential components for the initiation of protein synthesis. Protects formylmethionyl-tRNA from spontaneous hydrolysis and promotes its binding to the 30S ribosomal subunits. Also involved in the hydrolysis of GTP during the formation of the 70S ribosomal complex. The polypeptide is Translation initiation factor IF-2 (Helicobacter pylori (strain P12)).